Here is a 234-residue protein sequence, read N- to C-terminus: Phosphoribosylaminoimidazole-succinocarboxamide synthase (234 aa).

It belongs to the SAICAR synthetase family.

It carries out the reaction 5-amino-1-(5-phospho-D-ribosyl)imidazole-4-carboxylate + L-aspartate + ATP = (2S)-2-[5-amino-1-(5-phospho-beta-D-ribosyl)imidazole-4-carboxamido]succinate + ADP + phosphate + 2 H(+). The protein operates within purine metabolism; IMP biosynthesis via de novo pathway; 5-amino-1-(5-phospho-D-ribosyl)imidazole-4-carboxamide from 5-amino-1-(5-phospho-D-ribosyl)imidazole-4-carboxylate: step 1/2. In Clostridium botulinum (strain ATCC 19397 / Type A), this protein is Phosphoribosylaminoimidazole-succinocarboxamide synthase.